The sequence spans 979 residues: Pheromone-regulated membrane protein 10 (979 aa).

Disordered stretches follow at residues 1–279 (MGKS…FFSK), 295–318 (LRNV…EVDG), 337–411 (YSSL…PQRV), 432–451 (FSTA…PLLD), and 491–528 (ATKH…LPKF). The span at 15–26 (GGKDARSPETRS) shows a compositional bias: basic and acidic residues. Residues 29-38 (SRSSTDNRSS) are compositionally biased toward low complexity. The segment covering 54–68 (LDLEEGVDDDADFDW) has biased composition (acidic residues). The segment covering 77 to 86 (DAQSLDNPFN) has biased composition (polar residues). The segment covering 105-115 (AIERDAVDTIR) has biased composition (basic and acidic residues). A compositionally biased stretch (acidic residues) spans 122 to 135 (EEPDSASDGEDVGM). Composition is skewed to basic and acidic residues over residues 138-148 (EYQRKRERLVD) and 158-175 (SPRR…HTET). A compositionally biased stretch (polar residues) spans 192 to 213 (EAGTGTNENGEASSSGMKSSIN). Positions 253-263 (GAEKGMKSMKD) are enriched in basic and acidic residues. The span at 360–372 (SPSTPSSSPGPES) shows a compositional bias: low complexity. The span at 379–395 (DDYDFDQVDSDGEDSDL) shows a compositional bias: acidic residues. Polar residues predominate over residues 503-515 (ASGSNSELPSFKN). The segment covering 516 to 528 (TRPKKNKKHLPKF) has biased composition (basic residues). A run of 10 helical transmembrane segments spans residues 658–678 (WVCV…AFGG), 680–700 (WVNL…QFIV), 710–730 (VFEI…GSIG), 734–754 (ICFG…YIIL), 773–793 (FYAI…AALF), 809–829 (PISP…ISLI), 832–852 (AHWI…VVTY), 864–884 (FTAS…SRVW), 886–906 (GLAV…GVAS), and 946–966 (ITMI…SLIV).

Belongs to the ThrE exporter (TC 2.A.79) family.

The protein localises to the membrane. The polypeptide is Pheromone-regulated membrane protein 10 (Zygosaccharomyces rouxii (strain ATCC 2623 / CBS 732 / NBRC 1130 / NCYC 568 / NRRL Y-229)).